Reading from the N-terminus, the 170-residue chain is Cytochrome c-type biogenesis protein CcmE (170 aa).

Topologically, residues 1-7 are cytoplasmic; it reads MTRKQRR. The chain crosses the membrane as a helical; Signal-anchor for type II membrane protein span at residues 8–28; sequence LTIIGGALFVLAVAAGLVLNA. The Periplasmic portion of the chain corresponds to 29-170; it reads LRDSIVFFST…GEKTAAGATQ (142 aa). Heme-binding residues include His-122 and Tyr-126. Positions 137–146 are enriched in basic and acidic residues; the sequence is KQGHWKDDYG. Residues 137-170 are disordered; it reads KQGHWKDDYGKPQAAKPGPVSMREGEKTAAGATQ.

Belongs to the CcmE/CycJ family.

Its subcellular location is the cell inner membrane. Heme chaperone required for the biogenesis of c-type cytochromes. Transiently binds heme delivered by CcmC and transfers the heme to apo-cytochromes in a process facilitated by CcmF and CcmH. This is Cytochrome c-type biogenesis protein CcmE from Bradyrhizobium sp. (strain BTAi1 / ATCC BAA-1182).